The following is a 110-amino-acid chain: MEALKIFGIFTVTAVAEIVGCYLPYLWLRQGHSIWLLVPAAFSLAAFVWLLTLHPEAAGRTYAAYGGIYVSVALMWLWLVESTRPTMTDLLGVLICIIGMAVIMFGPRNV.

The next 4 membrane-spanning stretches (helical) occupy residues 6–26, 33–53, 61–81, and 87–107; these read IFGI…LPYL, SIWL…LLTL, TYAA…WLVE, and MTDL…MFGP.

It belongs to the UPF0060 family.

It localises to the cell inner membrane. In Psychromonas ingrahamii (strain DSM 17664 / CCUG 51855 / 37), this protein is UPF0060 membrane protein Ping_0587.